The chain runs to 504 residues: MTQTNGFDALHAHAQRLRGAAIPALLAAEPQRPTQYARQVGPLYFNFARQKYDRAALDALFAIARERDLAGAFQRLFRGEQVNVTEQRAALHTALRGDLTDAPVASEAYATAAEVRQRMGALIQQLEATEVTDIVSVGIGGSDLGPRLVADALRPVSGARFRVHFVSNVDGAAMQRTLATLDPARTAGILISKTFGTQETLLNGSILHAWLGGSERLYAVSANPERAAKAFDIAPGRVLPMWDWVGGRYSLWSAVGFPIALAIGFERFEQLLEGAAQFDAHVLNTPLEENVAVLHGLTAVWNRNLLGSATHAVMTYDQRLALLPSYLQQLVMESLGKRVKLDGSAVDSDTVSVWWGGAGTDVQHSFFQALHQGTSVVPADFIGTVHNDDPYAENHVALMANVLAQTEALANGQDSSDPHRSYPGGRPSTVILLDALTPQALGGLISMYEHSVYVQSVMWGINAFDQFGVELGKQLASQLLPALKGEAADVADPVTRELLSKLRG.

The Proton donor role is filled by glutamate 333. Residues histidine 364 and lysine 473 contribute to the active site.

Belongs to the GPI family.

Its subcellular location is the cytoplasm. The catalysed reaction is alpha-D-glucose 6-phosphate = beta-D-fructose 6-phosphate. The protein operates within carbohydrate biosynthesis; gluconeogenesis. It functions in the pathway carbohydrate degradation; glycolysis; D-glyceraldehyde 3-phosphate and glycerone phosphate from D-glucose: step 2/4. In terms of biological role, catalyzes the reversible isomerization of glucose-6-phosphate to fructose-6-phosphate. The protein is Glucose-6-phosphate isomerase of Xanthomonas euvesicatoria pv. vesicatoria (strain 85-10) (Xanthomonas campestris pv. vesicatoria).